A 601-amino-acid chain; its full sequence is Serine/threonine-protein phosphatase 2A 65 kDa regulatory subunit A beta isoform (601 aa).

An N-acetylalanine modification is found at Ala-2. HEAT repeat units follow at residues Asp-20–Arg-58, Thr-59–Asp-96, Phe-97–Ala-135, Leu-136–Ala-173, Val-174–Ser-212, Val-213–Asp-251, Leu-252–Ile-290, Ala-291–Val-333, Ile-334–Asn-372, Thr-373–Gln-411, Leu-412–Phe-450, Phe-451–Trp-489, Ala-490–Ile-528, Thr-529–Ala-567, and Leu-568–Ala-601.

The protein belongs to the phosphatase 2A regulatory subunit A family. In terms of assembly, PP2A consists of a common heterodimeric core enzyme, composed of a 36 kDa catalytic subunit (subunit C) and a 65 kDa constant regulatory subunit (PR65 or subunit A), that associates with a variety of regulatory subunits. Proteins that associate with the core dimer include three families of regulatory subunits B (the R2/B/PR55/B55, R3/B''/PR72/PR130/PR59 and R5/B'/B56 families), the 48 kDa variable regulatory subunit, viral proteins, and cell signaling molecules. Interacts with IPO9. Interacts with SGO1. Interacts with RAF1.

Functionally, the PR65 subunit of protein phosphatase 2A serves as a scaffolding molecule to coordinate the assembly of the catalytic subunit and a variable regulatory B subunit. The chain is Serine/threonine-protein phosphatase 2A 65 kDa regulatory subunit A beta isoform (Ppp2r1b) from Rattus norvegicus (Rat).